Here is a 474-residue protein sequence, read N- to C-terminus: tRNA-2-methylthio-N(6)-dimethylallyladenosine synthase (474 aa).

In terms of domain architecture, MTTase N-terminal spans lysine 3–glycine 120. Residues cysteine 12, cysteine 49, cysteine 83, cysteine 157, cysteine 161, and cysteine 164 each coordinate [4Fe-4S] cluster. The 233-residue stretch at arginine 143–alanine 375 folds into the Radical SAM core domain. One can recognise a TRAM domain in the interval arginine 378–arginine 441.

It belongs to the methylthiotransferase family. MiaB subfamily. Monomer. [4Fe-4S] cluster serves as cofactor.

Its subcellular location is the cytoplasm. The catalysed reaction is N(6)-dimethylallyladenosine(37) in tRNA + (sulfur carrier)-SH + AH2 + 2 S-adenosyl-L-methionine = 2-methylsulfanyl-N(6)-dimethylallyladenosine(37) in tRNA + (sulfur carrier)-H + 5'-deoxyadenosine + L-methionine + A + S-adenosyl-L-homocysteine + 2 H(+). Its function is as follows. Catalyzes the methylthiolation of N6-(dimethylallyl)adenosine (i(6)A), leading to the formation of 2-methylthio-N6-(dimethylallyl)adenosine (ms(2)i(6)A) at position 37 in tRNAs that read codons beginning with uridine. The protein is tRNA-2-methylthio-N(6)-dimethylallyladenosine synthase of Salmonella paratyphi A (strain ATCC 9150 / SARB42).